The primary structure comprises 254 residues: NAD-dependent protein deacetylase 1 (254 aa).

Positions 5–254 (ASDLRSGVER…GETLGPFVGN (250 aa)) constitute a Deacetylase sirtuin-type domain. The NAD(+) site is built by A31, T35, F42, R43, Q108, I110, D111, and H128. F42 contacts nicotinamide. Residues I110 and D111 each coordinate nicotinamide. Residue H128 is the Proton acceptor of the active site. Residues C136, C139, C160, and C163 each coordinate Zn(2+). 5 residues coordinate NAD(+): S201, S202, N226, D243, and I244.

The protein belongs to the sirtuin family. Class U subfamily. Zn(2+) serves as cofactor.

The protein localises to the cytoplasm. It carries out the reaction N(6)-acetyl-L-lysyl-[protein] + NAD(+) + H2O = 2''-O-acetyl-ADP-D-ribose + nicotinamide + L-lysyl-[protein]. In terms of biological role, NAD-dependent protein deacetylase which modulates the activities of several enzymes which are inactive in their acetylated form. This chain is NAD-dependent protein deacetylase 1, found in Bradyrhizobium diazoefficiens (strain JCM 10833 / BCRC 13528 / IAM 13628 / NBRC 14792 / USDA 110).